The sequence spans 289 residues: Bifunctional aminodeoxychorismate lyase / D-amino acid transaminase (289 aa).

Residue arginine 50 coordinates pyridoxal 5'-phosphate. Lysine 149 carries the post-translational modification N6-(pyridoxal phosphate)lysine. Pyridoxal 5'-phosphate is bound by residues tyrosine 153, threonine 216, and threonine 217. Residue serine 252 coordinates 2-oxoglutarate. Serine 253 lines the pyridoxal 5'-phosphate pocket. Residues methionine 254 and threonine 255 each contribute to the 2-oxoglutarate site.

It belongs to the class-IV pyridoxal-phosphate-dependent aminotransferase family. Homodimer. Pyridoxal 5'-phosphate is required as a cofactor.

The catalysed reaction is 4-amino-4-deoxychorismate = 4-aminobenzoate + pyruvate + H(+). The enzyme catalyses D-alanine + 2-oxoglutarate = D-glutamate + pyruvate. It functions in the pathway cofactor biosynthesis; tetrahydrofolate biosynthesis; 4-aminobenzoate from chorismate: step 2/2. It participates in cell wall biogenesis; peptidoglycan biosynthesis. In terms of biological role, bifunctional enzyme that catalyzes two enzymatic reactions in biochemically unrelated pathways: acts as an aminodeoxychorismate (ADC) lyase (ADCL) in folate biosynthesis, converting 4-amino-4-deoxychorismate (ADC) to 4-aminobenzoate (PABA), and as a D-amino acid transaminase (DAAT) in peptidoglycan (PG) biosynthesis. DAAT activity is strictly restricted to D-alanine and D-glutamate. May function as a metabolic toggle that alternates between ADCL and DAAT activity, prioritizing the former over the latter in response to substrate accumulation. Bifunctionality of this enzyme provides a failsafe mechanism for a metabolic coupling between nucleic acid and cell wall biosynthesis that appears to ensure prioritization of PABA production over D-alanine/D-glutamate biosynthesis. The polypeptide is Bifunctional aminodeoxychorismate lyase / D-amino acid transaminase (Mycobacterium tuberculosis (strain ATCC 25618 / H37Rv)).